The following is a 348-amino-acid chain: Protein arginine N-methyltransferase 1 (348 aa).

Residues 24-342 (KDYYFDSYAH…KGEVCDLNEQ (319 aa)) enclose the SAM-dependent MTase PRMT-type domain. Positions 37, 46, 70, 92, and 121 each coordinate S-adenosyl-L-methionine. Active-site residues include glutamate 139 and glutamate 148.

It belongs to the class I-like SAM-binding methyltransferase superfamily. Protein arginine N-methyltransferase family. Interacts with daf-16. Interacts with pgl-1 and pgl-3. Interacts with alg-1. In terms of tissue distribution, widely expressed in pharyngeal, body wall muscle, intestinal and vulval cells.

It is found in the cytoplasm. The protein localises to the nucleus. The enzyme catalyses L-arginyl-[protein] + 2 S-adenosyl-L-methionine = N(omega),N(omega)-dimethyl-L-arginyl-[protein] + 2 S-adenosyl-L-homocysteine + 2 H(+). It catalyses the reaction L-arginyl-[protein] + S-adenosyl-L-methionine = N(omega)-methyl-L-arginyl-[protein] + S-adenosyl-L-homocysteine + H(+). Its function is as follows. Arginine methyltransferase that methylates (mono and asymmetric dimethylation) the guanidino nitrogens of arginyl residues present in target proteins. Catalyzes the formation of monomethylarginine and asymmetric dimethylarginine on histones H2A and H4, a specific tag for epigenetic transcriptional activation. Catalyzes asymmetric arginine dimethylation of mitochondrial proteins necessary for mitochondrial oxidative phosphorylation activity and thus aerobic respiration and ATP synthesis, and the mitochondrial stress response. Methylates arginine residues in P-granule components pgl-1 and pgl-3 to promote P-granule degradation by autophagy in somatic cells to ensure exclusive localization of the P-granules in germ cells. Modulates the interaction of P-granule proteins epg-2 and sepa-1. Methylates arginine residues in daf-16, which blocks ftt-2 binding to daf-16, prevents akt-mediated phosphorylation and allows for daf-16 to translocate to the nucleus. In turn, association with daf-16 therefore allows for the transcriptional activation of daf-16 and regulation of longevity-related genes. Maintains lifespan by modulating daf-16 activity downstream of the daf-2 signaling pathway. Plays a role in heat and oxidative stress resistance. Role in stress resistance and also fat storage may be in association with the daf-2 signaling pathway. Required for normal feeding behavior. This Caenorhabditis elegans protein is Protein arginine N-methyltransferase 1.